Reading from the N-terminus, the 349-residue chain is UPF0324 inner membrane protein YeiH (349 aa).

The Periplasmic segment spans residues 1 to 12 (MTNITLQKQHRT). Residues 13–32 (LWHFIPGLALSAVITGVALW) traverse the membrane as a helical segment. Residues 33–35 (GGS) lie on the Cytoplasmic side of the membrane. Residues 36–58 (IPAVAGAGFSALTLAILLGMVLG) traverse the membrane as a helical segment. Over 59 to 99 (NTIYPHIWKSCDGGVLFAKQYLLRLGIILYGFRLTFSQIAD) the chain is Periplasmic. The chain crosses the membrane as a helical span at residues 100 to 122 (VGISGIIIDVLTLSSTFLLACFL). Residues 123–131 (GQKVFGLDK) lie on the Cytoplasmic side of the membrane. Residues 132–151 (HTSWLIGAGSSICGAAAVLA) form a helical membrane-spanning segment. Residues 152-162 (TEPVVKAEASK) are Periplasmic-facing. The helical transmembrane segment at 163-185 (VTVAVATVVIFGTVAIFLYPAIY) threads the bilayer. The Cytoplasmic segment spans residues 186-261 (PLMSQWFSPE…SGANSGEKSK (76 aa)). Residues 262–283 (ITIPWFAILFIVVAIFNSFHLL) traverse the membrane as a helical segment. Over 284-289 (PQSVVN) the chain is Periplasmic. Residues 290-312 (MLVTLDTFLLAMAMAALGLTTHV) traverse the membrane as a helical segment. Topologically, residues 313–321 (SALKKAGAK) are cytoplasmic. A helical transmembrane segment spans residues 322–344 (PLLMALVLFAWLIVGGGAINYVI). Residues 345 to 349 (QSVIA) are Periplasmic-facing.

The protein belongs to the UPF0324 family.

The protein resides in the cell inner membrane. In Escherichia coli O157:H7, this protein is UPF0324 inner membrane protein YeiH (yeiH).